The primary structure comprises 446 residues: Enolase (446 aa).

Residues H164 and E173 each contribute to the substrate site. E216 (proton donor) is an active-site residue. Residues D251, E302, and D329 each contribute to the Mg(2+) site. Residues E302 and D329 each contribute to the substrate site. Residue K354 is the Proton acceptor of the active site. Residues 381-384 (SHRS) and K405 each bind substrate.

It belongs to the enolase family. In terms of assembly, homodimer. Mg(2+) serves as cofactor.

The protein localises to the cytoplasm. It carries out the reaction (2R)-2-phosphoglycerate = phosphoenolpyruvate + H2O. Its pathway is carbohydrate degradation; glycolysis; pyruvate from D-glyceraldehyde 3-phosphate: step 4/5. The protein is Enolase (ENO1) of Oryza sativa subsp. japonica (Rice).